Here is a 364-residue protein sequence, read N- to C-terminus: MATLSPLLLAALLWVPVGTLTCYGDSGQPVDWFVVYKLPAHSSPGDVAQSGLRYKYLDEESGGWRDGAGSINSSTGALGRSLLPLYRNTSQLAFLLYNDQPPKYRGSQHSSNRGHTKGVLLLDQEGGFWLIHSVPNFPPPSSSAAYSWPPSARTYGQTLICVSFPLTQFLNISRQLTYTYPMVYDYKLEGDFARKFPYLEEVVKGHHVLQEPWNSSVTLTSKAGASFQSFAKCGNFGDDLYSGWLAEALGSNLQVQFWQRSAGILPSNCSGVQHVLDVTQIAFPGPAGPNFNATEDHSKWCVAPERPWTCVGDMNRNKREEHRGGGTLCAQLPALWKAFKPLVKAWEPCEKENRAFSPRSPAKD.

The signal sequence occupies residues 1–21 (MATLSPLLLAALLWVPVGTLT). The cysteines at positions 22 and 161 are disulfide-linked. N-linked (GlcNAc...) asparagine glycosylation is found at N72, N88, N171, N214, N268, and N292. 2 disulfides stabilise this stretch: C269–C349 and C310–C329. Residue H297 is part of the active site.

It belongs to the DNase II family.

The protein localises to the lysosome. It carries out the reaction Endonucleolytic cleavage to nucleoside 3'-phosphates and 3'-phosphooligonucleotide end-products.. Its function is as follows. Hydrolyzes DNA under acidic conditions with a preference for double-stranded DNA. Plays a major role in the clearance of nucleic acids generated through apoptosis, hence preventing autoinflammation. Necessary for proper fetal development and for definitive erythropoiesis in fetal liver and bone marrow, where it degrades nuclear DNA expelled from erythroid precursor cells. This Sus scrofa (Pig) protein is Deoxyribonuclease-2-alpha (DNASE2).